Here is a 342-residue protein sequence, read N- to C-terminus: Succinylglutamate desuccinylase (342 aa).

Positions 63, 66, and 159 each coordinate Zn(2+). Glu222 is a catalytic residue.

This sequence belongs to the AspA/AstE family. Succinylglutamate desuccinylase subfamily. The cofactor is Zn(2+).

It carries out the reaction N-succinyl-L-glutamate + H2O = L-glutamate + succinate. Its pathway is amino-acid degradation; L-arginine degradation via AST pathway; L-glutamate and succinate from L-arginine: step 5/5. In terms of biological role, transforms N(2)-succinylglutamate into succinate and glutamate. This chain is Succinylglutamate desuccinylase, found in Paraburkholderia xenovorans (strain LB400).